A 391-amino-acid chain; its full sequence is Phosphoprotein (391 aa).

A phosphothreonine mark is found at Thr-10, Thr-16, and Thr-39. Phosphoserine is present on Ser-69. Disordered regions lie at residues 82–101 (SSSE…FAQT) and 143–208 (PRTS…PANV). 3 positions are modified to phosphothreonine: Thr-91, Thr-150, and Thr-165. Phosphoserine is present on Ser-188. Polar residues predominate over residues 198-208 (LPQQDSTPANV). A coiled-coil region spans residues 218–245 (ANEIMDLLRGMDARLQHLEQKVDKVLAQ). At Thr-250 the chain carries Phosphothreonine. Ser-257 carries the phosphoserine modification. A phosphothreonine mark is found at Thr-258 and Thr-282. 2 positions are modified to phosphoserine: Ser-292 and Ser-294. At Thr-298 the chain carries Phosphothreonine. Ser-301 and Ser-374 each carry phosphoserine. Residues 343-391 (AGRKVMITKMITDCVANPQMKQAFEQRLAKASTEDALNDIKRDIIRSAI) form an interaction with the nucleoprotein region. The tract at residues 348–391 (MITKMITDCVANPQMKQAFEQRLAKASTEDALNDIKRDIIRSAI) is x domain (XD). Position 375 is a phosphothreonine (Thr-375).

Belongs to the rubulavirus/avulavirus P protein family. In terms of assembly, homotetramer. Interacts (via multimerization domain) with polymerase L; this interaction forms the polymerase L-P complex. Interacts (via N-terminus) with N0 (via Ncore); this interaction allows P to chaperon N0 to avoid N polymerization before encapsidation. Interacts (via C-terminus) with N-RNA template; this interaction positions the polymerase on the template for both transcription and replication. Interacts with host RPS6KB1 kinase; this interaction may play a role in the viral replication and transcription.

Its subcellular location is the virion. Its function is as follows. Essential cofactor of the RNA polymerase L that plays a central role in the transcription and replication by forming the polymerase complex with RNA polymerase L and recruiting L to the genomic N-RNA template for RNA synthesis. Also plays a central role in the encapsidation of nascent RNA chains by forming the encapsidation complex with the nucleocapsid protein N (N-P complex). Acts as a chaperone for newly synthesized free N protein, so-called N0, allowing encapsidation of nascent RNA chains during replication. The nucleoprotein protein N prevents excessive phosphorylation of P, which leads to down-regulation of viral transcription/ replication. Participates, together with N, in the formation of viral factories (viroplasms), which are large inclusions in the host cytoplasm where replication takes place. This is Phosphoprotein (V/P) from Mumps orthorubulavirus (MuV).